Consider the following 887-residue polypeptide: Multiple RNA-binding domain-containing protein 1 (887 aa).

The region spanning 2-94 (SRIIVKGLPV…SKIEVSMAKS (93 aa)) is the RRM 1 domain. 3 disordered regions span residues 121-143 (KLLQEENRKKKKVDENKHSNIDD), 203-276 (KEEN…RNLA), and 297-336 (SEAETREKSSSYATEQNESLDTKKEEQPERAVPQKTDEEL). Residues serine 220 and serine 264 each carry the phosphoserine modification. Over residues 264–276 (SDEKENEKRRNLA) the composition is skewed to basic and acidic residues. Positions 306-315 (SSYATEQNES) are enriched in polar residues. A compositionally biased stretch (basic and acidic residues) spans 316 to 325 (LDTKKEEQPE). RRM domains follow at residues 345–423 (GRLF…PGEE), 532–604 (KVIL…RGPK), 663–746 (VSIF…LSHR), and 763–840 (GKII…YAEE). Residues 864–887 (EMAALRNGGGRKKLDVDDEENEGF) form a disordered region.

It belongs to the RRM MRD1 family. As to quaternary structure, interacts with NOP1. Binds to the 35S pre-rRNA and the U3 snoRNA.

It is found in the nucleus. Its function is as follows. Involved in pre-rRNA processing. Required for maintaining steady-state levels of 40S ribosomal subunit. Required for the initial processing of pre-rRNA at the A0 to A2 sites, leading to the processing of the 23S pre-rRNA intermediate to the 18S rRNA. This is Multiple RNA-binding domain-containing protein 1 (MRD1) from Saccharomyces cerevisiae (strain ATCC 204508 / S288c) (Baker's yeast).